We begin with the raw amino-acid sequence, 487 residues long: Probable cytochrome P450 513B1 (487 aa).

The chain crosses the membrane as a helical span at residues 1-18 (MNLLVLSVILAIIIYLIF). Heme is bound at residue Cys-433.

Belongs to the cytochrome P450 family. The cofactor is heme.

The protein resides in the membrane. In Dictyostelium discoideum (Social amoeba), this protein is Probable cytochrome P450 513B1 (cyp513B1).